A 239-amino-acid polypeptide reads, in one-letter code: Inner kinetochore subunit MCM22 (239 aa).

The protein belongs to the CENP-K/MCM22 family. Component of the heterotrimeric kinetochore subcomplex CTF3, which consists of CTF3, MCM16 and MCM22. The CTF3 subcomplex is part of a larger constitutive centromere-associated network (CCAN) (also known as central kinetochore CTF19 complex in yeast), which is composed of at least AME1, CHL4, CNN1, CTF3, CTF19, IML3, MCM16, MCM21, MCM22, MHF1, MHF2, MIF2, NKP1, NKP2, OKP1 and WIP1. Interacts with CTF19.

It is found in the nucleus. The protein localises to the chromosome. The protein resides in the centromere. It localises to the kinetochore. Functionally, component of the kinetochore, a multiprotein complex that assembles on centromeric DNA and attaches chromosomes to spindle microtubules, mediating chromosome segregation and sister chromatid segregation during meiosis and mitosis. Component of the inner kinetochore constitutive centromere-associated network (CCAN), which serves as a structural platform for outer kinetochore assembly. The sequence is that of Inner kinetochore subunit MCM22 (MCM22) from Saccharomyces cerevisiae (strain ATCC 204508 / S288c) (Baker's yeast).